Consider the following 400-residue polypeptide: Nicotinate phosphoribosyltransferase (400 aa).

Residue histidine 220 is modified to Phosphohistidine; by autocatalysis.

Belongs to the NAPRTase family. Post-translationally, transiently phosphorylated on a His residue during the reaction cycle. Phosphorylation strongly increases the affinity for substrates and increases the rate of nicotinate D-ribonucleotide production. Dephosphorylation regenerates the low-affinity form of the enzyme, leading to product release.

The enzyme catalyses nicotinate + 5-phospho-alpha-D-ribose 1-diphosphate + ATP + H2O = nicotinate beta-D-ribonucleotide + ADP + phosphate + diphosphate. The protein operates within cofactor biosynthesis; NAD(+) biosynthesis; nicotinate D-ribonucleotide from nicotinate: step 1/1. Catalyzes the synthesis of beta-nicotinate D-ribonucleotide from nicotinate and 5-phospho-D-ribose 1-phosphate at the expense of ATP. The chain is Nicotinate phosphoribosyltransferase from Escherichia coli O17:K52:H18 (strain UMN026 / ExPEC).